We begin with the raw amino-acid sequence, 481 residues long: UDP-N-acetylmuramoyl-L-alanyl-D-glutamate--L-lysine ligase (481 aa).

Ser-42 contacts UDP-N-acetyl-alpha-D-muramoyl-L-alanyl-D-glutamate. 118–124 is an ATP binding site; sequence GTKGKTT. UDP-N-acetyl-alpha-D-muramoyl-L-alanyl-D-glutamate-binding positions include 160 to 161, Ser-187, and Arg-195; that span reads TT. Lys-229 carries the N6-carboxylysine modification. Residues 404-407 carry the L-lysine recognition motif motif; the sequence is DDPN.

It belongs to the MurCDEF family. MurE subfamily. Post-translationally, carboxylation is probably crucial for Mg(2+) binding and, consequently, for the gamma-phosphate positioning of ATP.

It localises to the cytoplasm. It catalyses the reaction UDP-N-acetyl-alpha-D-muramoyl-L-alanyl-D-glutamate + L-lysine + ATP = UDP-N-acetyl-alpha-D-muramoyl-L-alanyl-gamma-D-glutamyl-L-lysine + ADP + phosphate + H(+). It participates in cell wall biogenesis; peptidoglycan biosynthesis. Functionally, catalyzes the addition of L-lysine to the nucleotide precursor UDP-N-acetylmuramoyl-L-alanyl-D-glutamate (UMAG) in the biosynthesis of bacterial cell-wall peptidoglycan. The polypeptide is UDP-N-acetylmuramoyl-L-alanyl-D-glutamate--L-lysine ligase (Streptococcus suis (strain 98HAH33)).